Consider the following 79-residue polypeptide: Cytochrome c oxidase assembly factor 6 homolog (79 aa).

In terms of domain architecture, CHCH spans 9 to 52; sequence RQACWGARDLYWRCLDDNAEDAARCQKLRSSFEASCPQQWIKYF. The Cx9C motif motif lies at 12-22; that stretch reads CWGARDLYWRC. 2 cysteine pairs are disulfide-bonded: Cys-12/Cys-44 and Cys-22/Cys-33. The Cx10C motif motif lies at 33-44; the sequence is CQKLRSSFEASC.

This sequence belongs to the cytochrome c oxidase subunit 6B family. In terms of assembly, found in a complex with TMEM177, COX20, MT-CO2/COX2, COX18, SCO1 and SCO2. Interacts with COA1, MT-CO2/COX2, SCO1, SCO2 and COX20. Interacts with COX20 in a MT-CO2/COX2- and COX18-dependent manner. Interacts with COX16.

It is found in the mitochondrion. The protein localises to the mitochondrion intermembrane space. Functionally, involved in the maturation of the mitochondrial respiratory chain complex IV subunit MT-CO2/COX2. Thereby, may regulate early steps of complex IV assembly. Mitochondrial respiratory chain complex IV or cytochrome c oxidase is the component of the respiratory chain that catalyzes the transfer of electrons from intermembrane space cytochrome c to molecular oxygen in the matrix and as a consequence contributes to the proton gradient involved in mitochondrial ATP synthesis. May also be required for efficient formation of respiratory supercomplexes comprised of complexes III and IV. The chain is Cytochrome c oxidase assembly factor 6 homolog (Coa6) from Mus musculus (Mouse).